The following is a 529-amino-acid chain: Heat shock factor protein 1 (529 aa).

Met1 carries the post-translational modification N-acetylmethionine. Positions Val15–Thr120 are DNA-binding domain. Lys80 bears the N6-acetyllysine mark. At Lys91 the chain carries N6-acetyllysine; alternate. Lys91 is covalently cross-linked (Glycyl lysine isopeptide (Lys-Gly) (interchain with G-Cter in SUMO2); alternate). Lys118 is subject to N6-acetyllysine. The residue at position 121 (Ser121) is a Phosphoserine; by MAPKAPK2. Residues Lys126 and Lys131 each participate in a glycyl lysine isopeptide (Lys-Gly) (interchain with G-Cter in SUMO2) cross-link. Residues Ile130–Leu203 form a hydrophobic repeat HR-A/B region. Position 142 is a phosphothreonine; by CK2 (Thr142). 2 positions are modified to N6-acetyllysine: Lys150 and Lys188. Positions Leu203–Lys224 are d domain. Lys208 carries the post-translational modification N6-acetyllysine; alternate. A Glycyl lysine isopeptide (Lys-Gly) (interchain with G-Cter in SUMO2); alternate cross-link involves residue Lys208. The residue at position 216 (Ser216) is a Phosphoserine; by PLK1. A regulatory domain region spans residues Ser221–Val310. Lys224 is covalently cross-linked (Glycyl lysine isopeptide (Lys-Gly) (interchain with G-Cter in SUMO2)). Ser230 is subject to Phosphoserine; by CAMK2A. Residues Ser275 and Ser292 each carry the phosphoserine modification. Residues Val295 to Leu324 form a disordered region. Lys298 bears the N6-acetyllysine; alternate mark. Lys298 is covalently cross-linked (Glycyl lysine isopeptide (Lys-Gly) (interchain with G-Cter in SUMO2); alternate). A Glycyl lysine isopeptide (Lys-Gly) (interchain with G-Cter in SUMO); alternate cross-link involves residue Lys298. Ser303 carries the phosphoserine; by GSK3-beta modification. A Phosphoserine; by MAPK3 modification is found at Ser307. Residues Ser314 and Ser319 each carry the phosphoserine modification. Phosphoserine; by PKA is present on Ser320. The residue at position 323 (Thr323) is a Phosphothreonine. Ser326 carries the phosphoserine; by MAPK12 modification. Positions Arg336–Lys372 are disordered. Ser344 carries the phosphoserine modification. The residue at position 363 (Ser363) is a Phosphoserine; by MAPK8. The segment at Glu371–Ser529 is transactivation domain. Residues Leu384–Val409 are hydrophobic repeat HR-C. A 9aaTAD motif is present at residues Ser412–Pro420. A Phosphoserine; by PLK1 modification is found at Ser419. Position 444 is a phosphoserine (Ser444). Disordered stretches follow at residues Ser444–Lys463 and Glu502–Ser529. Lys524 is subject to N6-acetyllysine.

Belongs to the HSF family. In terms of assembly, monomer; cytoplasmic latent and transcriptionally inactive monomeric form in unstressed cells. Homotrimer; in response to stress, such as heat shock, homotrimerizes and translocates into the nucleus, binds to heat shock element (HSE) sequences in promoter of heat shock protein (HSP) genes and acquires transcriptional ability. Interacts (via monomeric form) with FKBP4; this interaction occurs in unstressed cells. Associates (via monomeric form) with HSP90 proteins in a multichaperone complex in unnstressed cell; this association maintains HSF1 in a non-DNA-binding and transcriptional inactive form by preventing HSF1 homotrimerization. Homotrimeric transactivation activity is modulated by protein-protein interactions and post-translational modifications. Interacts with HSP90AA1; this interaction is decreased in a IER5-dependent manner, promoting HSF1 accumulation in the nucleus, homotrimerization and DNA-binding activities. Part (via regulatory domain in the homotrimeric form) of a large heat shock-induced HSP90-dependent multichaperone complex at least composed of FKBP4, FKBP5, HSP90 proteins, PPID, PPP5C and PTGES3; this association maintains the HSF1 homotrimeric DNA-bound form in a transcriptionally inactive form. Interacts with BAG3 (via BAG domain); this interaction occurs in normal and heat-shocked cells promoting nuclear shuttling of HSF1 in a BAG3-dependent manner. Interacts (via homotrimeric and hyperphosphorylated form) with FKBP4; this interaction occurs upon heat shock in a HSP90-dependent multichaperone complex. Interacts (via homotrimeric form preferentially) with EEF1A proteins. In heat shocked cells, stress-denatured proteins compete with HSF1 homotrimeric DNA-bound form for association of the HSP90-dependent multichaperone complex, and hence alleviating repression of HSF1-mediated transcriptional activity. Interacts (via homotrimeric form preferentially) with DAXX; this interaction relieves homotrimeric HSF1 from repression of its transcriptional activity by HSP90-dependent multichaperone complex upon heat shock. Interacts (via D domain and preferentially with hyperphosphorylated form) with JNK1; this interaction occurs under both normal growth conditions and immediately upon heat shock. Interacts (via D domain and preferentially with hyperphosphorylated form) with MAPK3; this interaction occurs upon heat shock. Interacts with IER5 (via central region); this interaction promotes PPP2CA-induced dephosphorylation on Ser-121, Ser-307, Ser-314, Thr-323 and Thr-367 and HSF1 transactivation activity. Found in a ribonucleoprotein complex composed of the HSF1 homotrimeric form, translation elongation factor eEF1A proteins and non-coding RNA heat shock RNA-1 (HSR1); this complex occurs upon heat shock and stimulates HSF1 DNA-binding activity. Interacts (via transactivation domain) with HSPA1A/HSP70 and DNAJB1; these interactions result in the inhibition of heat shock- and HSF1-induced transcriptional activity during the attenuation and recovery phase from heat shock. Interacts (via Ser-303 and Ser-307 phosphorylated form) with YWHAE; this interaction promotes HSF1 sequestration in the cytoplasm in an ERK-dependent manner. Found in a complex with IER5 and PPP2CA. Interacts with TPR; this interaction increases upon heat shock and stimulates export of HSP70 mRNA. Interacts with SYMPK (via N-terminus) and CSTF2; these interactions occur upon heat shock. Interacts (via transactivation domain) with HSPA8. Interacts with EEF1D; this interaction occurs at heat shock promoter element (HSE) sequences. Interacts with MAPKAPK2. Interacts with PRKACA/PKA. Interacts (via transactivation domain) with GTF2A2. Interacts (via transactivation domain) with GTF2B. Interacts (via transactivation domain) with TBP. Interacts with CDK9, CCNT1 and EP300. Interacts (via N-terminus) with XRCC5 (via N-terminus) and XRCC6 (via N-terminus); these interactions are direct and prevent XRCC5/XRCC6 heterodimeric binding and non-homologous end joining (NHEJ) repair activities induced by ionizing radiation (IR). Interacts with PLK1; this interaction occurs during the early mitotic period, increases upon heat shock but does not modulate neither HSF1 homotrimerization and DNA-binding activities. Interacts (via Ser-216 phosphorylated form) with CDC20; this interaction occurs in mitosis in a MAD2L1-dependent manner and prevents PLK1-stimulated degradation of HSF1 by blocking the recruitment of the SCF(BTRC) ubiquitin ligase complex. Interacts with MAD2L1; this interaction occurs in mitosis. Interacts with BTRC; this interaction occurs during mitosis, induces its ubiquitin-dependent degradation following stimulus-dependent phosphorylation at Ser-216, a process inhibited by CDC20. Interacts with HSP90AA1 and HSP90AB1. Forms a complex with TTC5/STRAP and p300/EP300; these interactions augment chromatin-bound HSF1 and p300/EP300 histone acetyltransferase activity. In terms of processing, phosphorylated. Phosphorylated in unstressed cells; this phosphorylation is constitutive and implicated in the repression of HSF1 transcriptional activity. Phosphorylated on Ser-121 by MAPKAPK2; this phosphorylation promotes interaction with HSP90 proteins and inhibits HSF1 homotrimerization, DNA-binding and transactivation activities. Phosphorylation on Ser-303 by GSK3B/GSK3-beta and on Ser-307 by MAPK3 within the regulatory domain is involved in the repression of HSF1 transcriptional activity and occurs in a RAF1-dependent manner. Phosphorylation on Ser-303 and Ser-307 increases HSF1 nuclear export in a YWHAE- and XPO1/CRM1-dependent manner. Phosphorylation on Ser-307 is a prerequisite for phosphorylation on Ser-303. According to PubMed:9535852, Ser-303 is not phosphorylated in unstressed cells. Phosphorylated on Ser-419 by PLK1; phosphorylation promotes nuclear translocation upon heat shock. Hyperphosphorylated upon heat shock and during the attenuation and recovery phase period of the heat shock response. Phosphorylated on Thr-142; this phosphorylation increases HSF1 transactivation activity upon heat shock. Phosphorylation on Ser-230 by CAMK2A; this phosphorylation enhances HSF1 transactivation activity upon heat shock. Phosphorylation on Ser-326 by MAPK12; this phosphorylation enhances HSF1 nuclear translocation, homotrimerization and transactivation activities upon heat shock. Phosphorylated on Ser-320 by PRKACA/PKA; this phosphorylation promotes nuclear localization and transcriptional activity upon heat shock. Phosphorylated on Ser-363 by MAPK8; this phosphorylation occurs upon heat shock, induces HSF1 translocation into nuclear stress bodies and negatively regulates transactivation activity. Neither basal nor stress-inducible phosphorylation on Ser-230, Ser-292, Ser-303, Ser-307, Ser-314, Ser-319, Ser-320, Thr-323, Ser-326, Ser-338, Ser-344, Ser-363, Thr-367, Ser-368 and Thr-369 within the regulatory domain is involved in the regulation of HSF1 subcellular localization or DNA-binding activity; however, it negatively regulates HSF1 transactivation activity. Phosphorylated on Ser-216 by PLK1 in the early mitotic period; this phosphorylation regulates HSF1 localization to the spindle pole, the recruitment of the SCF(BTRC) ubiquitin ligase complex inducing HSF1 degradation, and hence mitotic progression. Dephosphorylated on Ser-121, Ser-307, Ser-314, Thr-323 and Thr-367 by phosphatase PPP2CA in an IER5-dependent manner, leading to HSF1-mediated transactivation activity. Sumoylated with SUMO1 and SUMO2 upon heat shock in a ERK2-dependent manner. Sumoylated by SUMO1 on Lys-298; sumoylation occurs upon heat shock and promotes its localization to nuclear stress bodies and DNA-binding activity. Phosphorylation on Ser-303 and Ser-307 is probably a prerequisite for sumoylation. Post-translationally, acetylated on Lys-118; this acetylation is decreased in a IER5-dependent manner. Acetylated on Lys-118, Lys-208 and Lys-298; these acetylations occur in a EP300-dependent manner. Acetylated on Lys-80; this acetylation inhibits DNA-binding activity upon heat shock. Deacetylated on Lys-80 by SIRT1; this deacetylation increases DNA-binding activity. In terms of processing, ubiquitinated by SCF(BTRC) and degraded following stimulus-dependent phosphorylation at Ser-216 by PLK1 in mitosis. Polyubiquitinated. Undergoes proteasomal degradation upon heat shock and during the attenuation and recovery phase period of the heat shock response.

The protein localises to the nucleus. The protein resides in the cytoplasm. It is found in the nucleoplasm. Its subcellular location is the perinuclear region. It localises to the cytoskeleton. The protein localises to the spindle pole. The protein resides in the microtubule organizing center. It is found in the centrosome. Its subcellular location is the chromosome. It localises to the centromere. The protein localises to the kinetochore. Functions as a stress-inducible and DNA-binding transcription factor that plays a central role in the transcriptional activation of the heat shock response (HSR), leading to the expression of a large class of molecular chaperones, heat shock proteins (HSPs), that protect cells from cellular insult damage. In unstressed cells, is present in a HSP90-containing multichaperone complex that maintains it in a non-DNA-binding inactivated monomeric form. Upon exposure to heat and other stress stimuli, undergoes homotrimerization and activates HSP gene transcription through binding to site-specific heat shock elements (HSEs) present in the promoter regions of HSP genes. Upon heat shock stress, forms a chromatin-associated complex with TTC5/STRAP and p300/EP300 to stimulate HSR transcription, therefore increasing cell survival. Activation is reversible, and during the attenuation and recovery phase period of the HSR, returns to its unactivated form. Binds to inverted 5'-NGAAN-3' pentamer DNA sequences. Binds to chromatin at heat shock gene promoters. Activates transcription of transcription factor FOXR1 which in turn activates transcription of the heat shock chaperones HSPA1A and HSPA6 and the antioxidant NADPH-dependent reductase DHRS2. Also serves several other functions independently of its transcriptional activity. Involved in the repression of Ras-induced transcriptional activation of the c-fos gene in heat-stressed cells. Positively regulates pre-mRNA 3'-end processing and polyadenylation of HSP70 mRNA upon heat-stressed cells in a symplekin (SYMPK)-dependent manner. Plays a role in nuclear export of stress-induced HSP70 mRNA. Plays a role in the regulation of mitotic progression. Also plays a role as a negative regulator of non-homologous end joining (NHEJ) repair activity in a DNA damage-dependent manner. Involved in stress-induced cancer cell proliferation in a IER5-dependent manner. Its function is as follows. (Microbial infection) Plays a role in latent human immunodeficiency virus (HIV-1) transcriptional reactivation. Binds to the HIV-1 long terminal repeat promoter (LTR) to reactivate viral transcription by recruiting cellular transcriptional elongation factors, such as CDK9, CCNT1 and EP300. In Homo sapiens (Human), this protein is Heat shock factor protein 1.